The chain runs to 390 residues: GTPase Obg (390 aa).

In terms of domain architecture, Obg spans 1 to 159 (MKFVDEASIL…RDLMLELMLL (159 aa)). The segment at 127–147 (NTRFKSSVNRTPRQKTMGTPG) is disordered. Residues 129-143 (RFKSSVNRTPRQKTM) show a composition bias toward polar residues. Residues 160-333 (ADVGMLGMPN…LCWDVMTFII (174 aa)) enclose the OBG-type G domain. GTP is bound by residues 166–173 (GMPNAGKS), 191–195 (FTTLV), 213–216 (DIPG), 283–286 (NKID), and 314–316 (SAA). Mg(2+)-binding residues include Ser173 and Thr193.

This sequence belongs to the TRAFAC class OBG-HflX-like GTPase superfamily. OBG GTPase family. In terms of assembly, monomer. The cofactor is Mg(2+).

The protein resides in the cytoplasm. In terms of biological role, an essential GTPase which binds GTP, GDP and possibly (p)ppGpp with moderate affinity, with high nucleotide exchange rates and a fairly low GTP hydrolysis rate. Plays a role in control of the cell cycle, stress response, ribosome biogenesis and in those bacteria that undergo differentiation, in morphogenesis control. The sequence is that of GTPase Obg from Citrobacter koseri (strain ATCC BAA-895 / CDC 4225-83 / SGSC4696).